A 293-amino-acid chain; its full sequence is Probable tRNA-splicing endonuclease subunit Sen2 (293 aa).

Active-site residues include tyrosine 157, histidine 165, and lysine 204. Residues 267–287 (VVFNHWGVILGFTVLSGLLVY) form a helical membrane-spanning segment.

Belongs to the tRNA-intron endonuclease family. TRNA splicing endonuclease is a heterotetramer composed of SEN2, SEN15, SEN34/LENG5 and SEN54.

The protein localises to the nucleus. The protein resides in the membrane. The enzyme catalyses pretRNA = a 3'-half-tRNA molecule with a 5'-OH end + a 5'-half-tRNA molecule with a 2',3'-cyclic phosphate end + an intron with a 2',3'-cyclic phosphate and a 5'-hydroxyl terminus.. Functionally, constitutes one of the two catalytic subunit of the tRNA-splicing endonuclease complex, a complex responsible for identification and cleavage of the splice sites in pre-tRNA. It cleaves pre-tRNA at the 5'- and 3'-splice sites to release the intron. The products are an intron and two tRNA half-molecules bearing 2',3'-cyclic phosphate and 5'-OH termini. There are no conserved sequences at the splice sites, but the intron is invariably located at the same site in the gene, placing the splice sites an invariant distance from the constant structural features of the tRNA body. Probably carries the active site for 5'-splice site cleavage. The chain is Probable tRNA-splicing endonuclease subunit Sen2 from Oryza sativa subsp. japonica (Rice).